Reading from the N-terminus, the 207-residue chain is Thiamine-phosphate synthase (207 aa).

Residues Gln-37–Lys-41 and Asn-69 each bind 4-amino-2-methyl-5-(diphosphooxymethyl)pyrimidine. Asp-70 and Asp-89 together coordinate Mg(2+). Ser-108 serves as a coordination point for 4-amino-2-methyl-5-(diphosphooxymethyl)pyrimidine. Thr-134–Ser-136 lines the 2-[(2R,5Z)-2-carboxy-4-methylthiazol-5(2H)-ylidene]ethyl phosphate pocket. Residue Lys-137 participates in 4-amino-2-methyl-5-(diphosphooxymethyl)pyrimidine binding. Residues Gly-165 and Ile-185–Ser-186 contribute to the 2-[(2R,5Z)-2-carboxy-4-methylthiazol-5(2H)-ylidene]ethyl phosphate site.

It belongs to the thiamine-phosphate synthase family. Mg(2+) is required as a cofactor.

It catalyses the reaction 2-[(2R,5Z)-2-carboxy-4-methylthiazol-5(2H)-ylidene]ethyl phosphate + 4-amino-2-methyl-5-(diphosphooxymethyl)pyrimidine + 2 H(+) = thiamine phosphate + CO2 + diphosphate. It carries out the reaction 2-(2-carboxy-4-methylthiazol-5-yl)ethyl phosphate + 4-amino-2-methyl-5-(diphosphooxymethyl)pyrimidine + 2 H(+) = thiamine phosphate + CO2 + diphosphate. The catalysed reaction is 4-methyl-5-(2-phosphooxyethyl)-thiazole + 4-amino-2-methyl-5-(diphosphooxymethyl)pyrimidine + H(+) = thiamine phosphate + diphosphate. The protein operates within cofactor biosynthesis; thiamine diphosphate biosynthesis; thiamine phosphate from 4-amino-2-methyl-5-diphosphomethylpyrimidine and 4-methyl-5-(2-phosphoethyl)-thiazole: step 1/1. Functionally, condenses 4-methyl-5-(beta-hydroxyethyl)thiazole monophosphate (THZ-P) and 2-methyl-4-amino-5-hydroxymethyl pyrimidine pyrophosphate (HMP-PP) to form thiamine monophosphate (TMP). The chain is Thiamine-phosphate synthase from Desulfitobacterium hafniense (strain DSM 10664 / DCB-2).